Here is a 286-residue protein sequence, read N- to C-terminus: MSSPTPDALLGPADVRELAAALGVRPTKQRGQNFVIDANTVRRIVRTAEVRPDDVVVEVGPGLGSLTLALLEAADRVTAVEIDDVLAGALPATVAARMPARADRFALVHSDAMHVRELPGPAPTALVANLPYNVAVPVLLHMLDTFPGIERTLVMVQAEVADRLAAGPGSKVYGVPSVKANWYAEVKRAGSIGRNVFWPAPNVDSGLVSLVRRSEPLRTTASKAEVFAVVDAAFAQRRKTLRAALAGWAGSAAAAEAALVGAGVSPQARGEALTVEEFARIAEHKV.

Residues Asn-33, Val-35, Gly-60, Glu-81, Asp-111, and Asn-129 each contribute to the S-adenosyl-L-methionine site.

This sequence belongs to the class I-like SAM-binding methyltransferase superfamily. rRNA adenine N(6)-methyltransferase family. RsmA subfamily.

It is found in the cytoplasm. It catalyses the reaction adenosine(1518)/adenosine(1519) in 16S rRNA + 4 S-adenosyl-L-methionine = N(6)-dimethyladenosine(1518)/N(6)-dimethyladenosine(1519) in 16S rRNA + 4 S-adenosyl-L-homocysteine + 4 H(+). In terms of biological role, specifically dimethylates two adjacent adenosines (A1518 and A1519) in the loop of a conserved hairpin near the 3'-end of 16S rRNA in the 30S particle. May play a critical role in biogenesis of 30S subunits. The chain is Ribosomal RNA small subunit methyltransferase A from Streptomyces coelicolor (strain ATCC BAA-471 / A3(2) / M145).